The sequence spans 430 residues: Histidine--tRNA ligase (430 aa).

This sequence belongs to the class-II aminoacyl-tRNA synthetase family. In terms of assembly, homodimer.

It is found in the cytoplasm. The catalysed reaction is tRNA(His) + L-histidine + ATP = L-histidyl-tRNA(His) + AMP + diphosphate + H(+). The polypeptide is Histidine--tRNA ligase (Chlorobaculum parvum (strain DSM 263 / NCIMB 8327) (Chlorobium vibrioforme subsp. thiosulfatophilum)).